The chain runs to 231 residues: 5'-methylthioadenosine/S-adenosylhomocysteine nucleosidase (231 aa).

Glu-12 acts as the Proton acceptor in catalysis. Residues Gly-78, Val-153, and 174-175 each bind substrate; that span reads ME. Catalysis depends on Asp-198, which acts as the Proton donor.

This sequence belongs to the PNP/UDP phosphorylase family. MtnN subfamily.

The enzyme catalyses S-adenosyl-L-homocysteine + H2O = S-(5-deoxy-D-ribos-5-yl)-L-homocysteine + adenine. It carries out the reaction S-methyl-5'-thioadenosine + H2O = 5-(methylsulfanyl)-D-ribose + adenine. The catalysed reaction is 5'-deoxyadenosine + H2O = 5-deoxy-D-ribose + adenine. It functions in the pathway amino-acid biosynthesis; L-methionine biosynthesis via salvage pathway; S-methyl-5-thio-alpha-D-ribose 1-phosphate from S-methyl-5'-thioadenosine (hydrolase route): step 1/2. Catalyzes the irreversible cleavage of the glycosidic bond in both 5'-methylthioadenosine (MTA) and S-adenosylhomocysteine (SAH/AdoHcy) to adenine and the corresponding thioribose, 5'-methylthioribose and S-ribosylhomocysteine, respectively. Also cleaves 5'-deoxyadenosine, a toxic by-product of radical S-adenosylmethionine (SAM) enzymes, into 5-deoxyribose and adenine. The polypeptide is 5'-methylthioadenosine/S-adenosylhomocysteine nucleosidase (Aliivibrio fischeri (strain MJ11) (Vibrio fischeri)).